Consider the following 283-residue polypeptide: Pantothenate synthetase (283 aa).

30 to 37 (MGYLHEGH) lines the ATP pocket. The active-site Proton donor is the His-37. Gln-61 contacts (R)-pantoate. A beta-alanine-binding site is contributed by Gln-61. 147-150 (GQKD) lines the ATP pocket. Position 153 (Gln-153) interacts with (R)-pantoate. ATP-binding positions include Val-176 and 184–187 (LSSR).

This sequence belongs to the pantothenate synthetase family. In terms of assembly, homodimer.

The protein localises to the cytoplasm. The catalysed reaction is (R)-pantoate + beta-alanine + ATP = (R)-pantothenate + AMP + diphosphate + H(+). Its pathway is cofactor biosynthesis; (R)-pantothenate biosynthesis; (R)-pantothenate from (R)-pantoate and beta-alanine: step 1/1. Its function is as follows. Catalyzes the condensation of pantoate with beta-alanine in an ATP-dependent reaction via a pantoyl-adenylate intermediate. The chain is Pantothenate synthetase from Moorella thermoacetica (strain ATCC 39073 / JCM 9320).